A 45-amino-acid polypeptide reads, in one-letter code: Large ribosomal subunit protein bL34 (45 aa).

Positions 1-45 are disordered; that stretch reads MTKRTLGGTVRKQKRTSGFRARMRSHTGQNVIRARRKKGRHRLTV. Composition is skewed to basic residues over residues 11–25 and 33–45; these read RKQK…RMRS and RARR…RLTV.

It belongs to the bacterial ribosomal protein bL34 family.

This chain is Large ribosomal subunit protein bL34, found in Picosynechococcus sp. (strain ATCC 27264 / PCC 7002 / PR-6) (Agmenellum quadruplicatum).